We begin with the raw amino-acid sequence, 187 residues long: Protein GrpE (187 aa).

A disordered region spans residues 1-26 (MHDPKESLETNIQETESQEKLPETPI).

This sequence belongs to the GrpE family. In terms of assembly, homodimer.

Its subcellular location is the cytoplasm. Functionally, participates actively in the response to hyperosmotic and heat shock by preventing the aggregation of stress-denatured proteins, in association with DnaK and GrpE. It is the nucleotide exchange factor for DnaK and may function as a thermosensor. Unfolded proteins bind initially to DnaJ; upon interaction with the DnaJ-bound protein, DnaK hydrolyzes its bound ATP, resulting in the formation of a stable complex. GrpE releases ADP from DnaK; ATP binding to DnaK triggers the release of the substrate protein, thus completing the reaction cycle. Several rounds of ATP-dependent interactions between DnaJ, DnaK and GrpE are required for fully efficient folding. This chain is Protein GrpE, found in Dichelobacter nodosus (strain VCS1703A).